Reading from the N-terminus, the 184-residue chain is Ribosome-recycling factor (184 aa).

Belongs to the RRF family.

It localises to the cytoplasm. In terms of biological role, responsible for the release of ribosomes from messenger RNA at the termination of protein biosynthesis. May increase the efficiency of translation by recycling ribosomes from one round of translation to another. This is Ribosome-recycling factor from Caldicellulosiruptor saccharolyticus (strain ATCC 43494 / DSM 8903 / Tp8T 6331).